Here is a 124-residue protein sequence, read N- to C-terminus: Small ribosomal subunit protein uS12 (124 aa).

Residues 1 to 23 form a disordered region; it reads MATINQLVRKPRVRQKQKSNVPA. A 3-methylthioaspartic acid modification is found at Asp-89. The tract at residues 103–124 is disordered; the sequence is DTAGVGDRRQGRSKYGAKRPKG. A compositionally biased stretch (basic residues) spans 113–124; sequence GRSKYGAKRPKG.

This sequence belongs to the universal ribosomal protein uS12 family. As to quaternary structure, part of the 30S ribosomal subunit. Contacts proteins S8 and S17. May interact with IF1 in the 30S initiation complex.

With S4 and S5 plays an important role in translational accuracy. Functionally, interacts with and stabilizes bases of the 16S rRNA that are involved in tRNA selection in the A site and with the mRNA backbone. Located at the interface of the 30S and 50S subunits, it traverses the body of the 30S subunit contacting proteins on the other side and probably holding the rRNA structure together. The combined cluster of proteins S8, S12 and S17 appears to hold together the shoulder and platform of the 30S subunit. This chain is Small ribosomal subunit protein uS12, found in Nitrosococcus oceani (strain ATCC 19707 / BCRC 17464 / JCM 30415 / NCIMB 11848 / C-107).